The following is a 197-amino-acid chain: Ribosome maturation factor RimP (197 aa).

This sequence belongs to the RimP family.

Its subcellular location is the cytoplasm. Its function is as follows. Required for maturation of 30S ribosomal subunits. This Acidovorax sp. (strain JS42) protein is Ribosome maturation factor RimP.